Here is a 701-residue protein sequence, read N- to C-terminus: Type 3 secretion system secretin (701 aa).

Residues 1 to 21 (MRKALMWLPLLLIGLSPATWA) form the signal peptide. Residues 229 to 238 (RGNGLAGGGS) show a composition bias toward gly residues. Positions 229-252 (RGNGLAGGGSPDTPSLPMSSSGLD) are disordered. Over residues 240–252 (DTPSLPMSSSGLD) the composition is skewed to polar residues.

Belongs to the bacterial secretin family. T3SS SctC subfamily. In terms of assembly, the core secretion machinery of the T3SS is composed of approximately 20 different proteins, including cytoplasmic components, a base, an export apparatus and a needle. This subunit is part of the base, which anchors the injectisome in the bacterial cell envelope. Forms a stable homooligomeric complex.

It is found in the cell outer membrane. Its function is as follows. Component of the type III secretion system (T3SS), also called injectisome, which is used to inject bacterial effector proteins into eukaryotic host cells. Forms a ring-shaped multimeric structure with an apparent central pore in the outer membrane. Involved in the secretion of a proteinaceous elicitor of the hypersensitivity response in plants. The sequence is that of Type 3 secretion system secretin from Pseudomonas syringae pv. syringae.